The chain runs to 258 residues: Sec-independent protein translocase protein TatC (258 aa).

Topologically, residues S2–C23 are cytoplasmic. The chain crosses the membrane as a helical span at residues I24–L44. Residues V45 to T75 lie on the Periplasmic side of the membrane. The helical transmembrane segment at F76–A96 threads the bilayer. At P97–S115 the chain is on the cytoplasmic side. The chain crosses the membrane as a helical span at residues L116 to F136. The Periplasmic segment spans residues L137–S156. Residues F157–L177 form a helical membrane-spanning segment. The Cytoplasmic segment spans residues L178–K192. Residues R193–P210 traverse the membrane as a helical segment. Residue D211 is a topological domain, periplasmic. A helical membrane pass occupies residues V212–F232. The Cytoplasmic segment spans residues S233–E258.

This sequence belongs to the TatC family. In terms of assembly, the Tat system comprises two distinct complexes: a TatABC complex, containing multiple copies of TatA, TatB and TatC subunits, and a separate TatA complex, containing only TatA subunits. Substrates initially bind to the TatABC complex, which probably triggers association of the separate TatA complex to form the active translocon. TatC can form a distinct, stable, multimeric complex independent of TatA and TatB. Each of TatA, TatB and TatC are able to interact in pairs without the third partner. Interacts with the signal sequence of DmsA and DmsD.

It is found in the cell inner membrane. Functionally, part of the twin-arginine translocation (Tat) system that transports large folded proteins containing a characteristic twin-arginine motif in their signal peptide across membranes. Together with TatB, TatC is part of a receptor directly interacting with Tat signal peptides. The protein is Sec-independent protein translocase protein TatC of Escherichia coli (strain K12).